The sequence spans 483 residues: Acetyl-coenzyme A carboxylase carboxyl transferase subunit beta, chloroplastic (483 aa).

The CoA carboxyltransferase N-terminal domain maps to 221 to 483 (LWVQCENCYG…FQFHGFFPRP (263 aa)). 4 residues coordinate Zn(2+): Cys-225, Cys-228, Cys-244, and Cys-247. The segment at 225-247 (CENCYGLNYKKFFSSKMNICEQC) adopts a C4-type zinc-finger fold.

The protein belongs to the AccD/PCCB family. As to quaternary structure, acetyl-CoA carboxylase is a heterohexamer composed of biotin carboxyl carrier protein, biotin carboxylase and 2 subunits each of ACCase subunit alpha and ACCase plastid-coded subunit beta (accD). Zn(2+) is required as a cofactor.

It localises to the plastid. Its subcellular location is the chloroplast stroma. It catalyses the reaction N(6)-carboxybiotinyl-L-lysyl-[protein] + acetyl-CoA = N(6)-biotinyl-L-lysyl-[protein] + malonyl-CoA. The protein operates within lipid metabolism; malonyl-CoA biosynthesis; malonyl-CoA from acetyl-CoA: step 1/1. Its function is as follows. Component of the acetyl coenzyme A carboxylase (ACC) complex. Biotin carboxylase (BC) catalyzes the carboxylation of biotin on its carrier protein (BCCP) and then the CO(2) group is transferred by the transcarboxylase to acetyl-CoA to form malonyl-CoA. The protein is Acetyl-coenzyme A carboxylase carboxyl transferase subunit beta, chloroplastic of Nuphar advena (Common spatterdock).